Consider the following 133-residue polypeptide: Small ribosomal subunit protein uS9 (133 aa).

Over residues 95–113 (GDSKQELKSRGFLTRDPRK) the composition is skewed to basic and acidic residues. The interval 95–133 (GDSKQELKSRGFLTRDPRKKERKKYGHKKARKSFQFSKR) is disordered. Basic residues predominate over residues 114 to 133 (KERKKYGHKKARKSFQFSKR).

It belongs to the universal ribosomal protein uS9 family.

The protein is Small ribosomal subunit protein uS9 of Chlamydia felis (strain Fe/C-56) (Chlamydophila felis).